We begin with the raw amino-acid sequence, 108 residues long: Putative pterin-4-alpha-carbinolamine dehydratase (108 aa).

The protein belongs to the pterin-4-alpha-carbinolamine dehydratase family.

The enzyme catalyses (4aS,6R)-4a-hydroxy-L-erythro-5,6,7,8-tetrahydrobiopterin = (6R)-L-erythro-6,7-dihydrobiopterin + H2O. The sequence is that of Putative pterin-4-alpha-carbinolamine dehydratase from Chromobacterium violaceum (strain ATCC 12472 / DSM 30191 / JCM 1249 / CCUG 213 / NBRC 12614 / NCIMB 9131 / NCTC 9757 / MK).